Consider the following 320-residue polypeptide: Beta-ketoacyl-[acyl-carrier-protein] synthase III (320 aa).

Catalysis depends on residues Cys114 and His247. The segment at 248 to 252 (QANRR) is ACP-binding. Asn277 is an active-site residue.

The protein belongs to the thiolase-like superfamily. FabH family. As to quaternary structure, homodimer.

The protein resides in the cytoplasm. The catalysed reaction is malonyl-[ACP] + acetyl-CoA + H(+) = 3-oxobutanoyl-[ACP] + CO2 + CoA. It functions in the pathway lipid metabolism; fatty acid biosynthesis. In terms of biological role, catalyzes the condensation reaction of fatty acid synthesis by the addition to an acyl acceptor of two carbons from malonyl-ACP. Catalyzes the first condensation reaction which initiates fatty acid synthesis and may therefore play a role in governing the total rate of fatty acid production. Possesses both acetoacetyl-ACP synthase and acetyl transacylase activities. Its substrate specificity determines the biosynthesis of branched-chain and/or straight-chain of fatty acids. This Neisseria gonorrhoeae (strain ATCC 700825 / FA 1090) protein is Beta-ketoacyl-[acyl-carrier-protein] synthase III.